Here is a 126-residue protein sequence, read N- to C-terminus: Thiocyanate hydrolase subunit alpha (126 aa).

As to quaternary structure, heterododecamer consisting of 4 alpha, 4 beta, and 4 gamma subunits.

The enzyme catalyses thiocyanate + H2O + 2 H(+) = carbonyl sulfide + NH4(+). Its pathway is organosulfur degradation; thiocyanate degradation. Involved in the degradation of thiocyanate. The sequence is that of Thiocyanate hydrolase subunit alpha (scnA) from Thiobacillus thioparus.